Here is a 622-residue protein sequence, read N- to C-terminus: Low affinity potassium transport system protein Kup (622 aa).

12 helical membrane passes run 12–32, 49–69, 103–123, 137–157, 165–185, 213–233, 247–267, 276–296, 337–357, 363–383, 396–416, and 419–439; these read ITLA…LYTL, VFGF…IKYL, VIMG…TPAI, PQLD…LFMI, VGKL…VLGL, VSFI…ALYA, WFTV…ALLL, PFFL…AALA, IYIP…IVSF, LAAA…ILST, FVAL…SANL, and LLSG…IMTT.

This sequence belongs to the HAK/KUP transporter (TC 2.A.72) family.

The protein resides in the cell inner membrane. It carries out the reaction K(+)(in) + H(+)(in) = K(+)(out) + H(+)(out). In terms of biological role, responsible for the low-affinity transport of potassium into the cell. Likely operates as a K(+):H(+) symporter. This chain is Low affinity potassium transport system protein Kup, found in Salmonella gallinarum (strain 287/91 / NCTC 13346).